Consider the following 894-residue polypeptide: Valine--tRNA ligase (894 aa).

The short motif at 48–58 is the 'HIGH' region element; sequence PNVTGFLHMGH. The 'KMSKS' region signature appears at 527–531; that stretch reads KMSKS. K530 contributes to the ATP binding site. Residues 827–852 adopt a coiled-coil conformation; the sequence is LVDFDEEVKRINKSIEKLTRDIGMLS.

The protein belongs to the class-I aminoacyl-tRNA synthetase family. ValS type 1 subfamily. As to quaternary structure, monomer.

It is found in the cytoplasm. It catalyses the reaction tRNA(Val) + L-valine + ATP = L-valyl-tRNA(Val) + AMP + diphosphate. Functionally, catalyzes the attachment of valine to tRNA(Val). As ValRS can inadvertently accommodate and process structurally similar amino acids such as threonine, to avoid such errors, it has a 'posttransfer' editing activity that hydrolyzes mischarged Thr-tRNA(Val) in a tRNA-dependent manner. The protein is Valine--tRNA ligase of Bdellovibrio bacteriovorus (strain ATCC 15356 / DSM 50701 / NCIMB 9529 / HD100).